Here is a 385-residue protein sequence, read N- to C-terminus: Spermidine/putrescine import ATP-binding protein PotA (385 aa).

In terms of domain architecture, ABC transporter spans 6 to 238; that stretch reads IEFKNVSKVF…PINHFVATFI (233 aa). Residue 40 to 47 participates in ATP binding; sequence GASGSGKS.

It belongs to the ABC transporter superfamily. Spermidine/putrescine importer (TC 3.A.1.11.1) family. As to quaternary structure, the complex is composed of two ATP-binding proteins (PotA), two transmembrane proteins (PotB and PotC) and a solute-binding protein (PotD).

The protein resides in the cell membrane. The enzyme catalyses ATP + H2O + polyamine-[polyamine-binding protein]Side 1 = ADP + phosphate + polyamineSide 2 + [polyamine-binding protein]Side 1.. Functionally, part of the ABC transporter complex PotABCD involved in spermidine/putrescine import. Responsible for energy coupling to the transport system. The polypeptide is Spermidine/putrescine import ATP-binding protein PotA (Streptococcus pneumoniae serotype 4 (strain ATCC BAA-334 / TIGR4)).